The sequence spans 588 residues: Juvenile hormone esterase (588 aa).

Residues 1–23 (MKFPKNLFLVLFYTSWKFCDVCA) form the signal peptide. Residues Asn-79 and Asn-83 are each glycosylated (N-linked (GlcNAc...) asparagine). The cysteines at positions 91 and 109 are disulfide-linked. Ser-214 functions as the Acyl-ester intermediate in the catalytic mechanism. Residue Asn-257 is glycosylated (N-linked (GlcNAc...) asparagine). Cys-268 and Cys-281 are oxidised to a cystine. The active-site Charge relay system is Glu-350. Residues Asn-389, Asn-396, and Asn-472 are each glycosylated (N-linked (GlcNAc...) asparagine). The active-site Charge relay system is His-479.

It belongs to the type-B carboxylesterase/lipase family.

Its subcellular location is the secreted. The catalysed reaction is juvenile hormone III + H2O = juvenile hormone III carboxylate + methanol + H(+). Inhibited by 3-octylthio-1,1,1-trifluoro-2-propanone (OTFP), a specific inhibitor of juvenile hormone esterase (JHE), but not by diisopropyl fluorophosphate (DFP), a serine enzyme inhibitor. Functionally, may function as a juvenile hormone (JH)-specific degradation enzyme in vivo decreasing JH activity. Hydrolyzes JH III in vitro. Hydrolyzes effectively also methyl hepthylthioacetothioate (HEPTAT), a synthetic substrate. Of the general esterase substrates, it has preference for 2-naphthyl acetate (2-NA) and shows a weak activity for 1-NA and 4-nitrophenylacetate (4-NPA). This chain is Juvenile hormone esterase, found in Tribolium castaneum (Red flour beetle).